Consider the following 118-residue polypeptide: Putative membrane protein insertion efficiency factor (118 aa).

This sequence belongs to the UPF0161 family.

It localises to the cell inner membrane. Its function is as follows. Could be involved in insertion of integral membrane proteins into the membrane. The polypeptide is Putative membrane protein insertion efficiency factor (Helicobacter pylori (strain P12)).